Here is a 188-residue protein sequence, read N- to C-terminus: NADH-quinone oxidoreductase subunit I 2 (188 aa).

4Fe-4S ferredoxin-type domains are found at residues 56-88 and 98-127; these read HFLKRDDEGEIKCVACELCARICPCDCIEVVPY and AKFEIDTARCLFCGLCEDACPADAIALGQQ. Residues Cys68, Cys71, Cys74, Cys78, Cys107, Cys110, Cys113, and Cys117 each coordinate [4Fe-4S] cluster.

It belongs to the complex I 23 kDa subunit family. As to quaternary structure, NDH-1 is composed of 14 different subunits. Subunits NuoA, H, J, K, L, M, N constitute the membrane sector of the complex. Requires [4Fe-4S] cluster as cofactor.

It localises to the cell inner membrane. It carries out the reaction a quinone + NADH + 5 H(+)(in) = a quinol + NAD(+) + 4 H(+)(out). NDH-1 shuttles electrons from NADH, via FMN and iron-sulfur (Fe-S) centers, to quinones in the respiratory chain. The immediate electron acceptor for the enzyme in this species is believed to be ubiquinone. Couples the redox reaction to proton translocation (for every two electrons transferred, four hydrogen ions are translocated across the cytoplasmic membrane), and thus conserves the redox energy in a proton gradient. This Rhizobium meliloti (strain 1021) (Ensifer meliloti) protein is NADH-quinone oxidoreductase subunit I 2.